A 315-amino-acid polypeptide reads, in one-letter code: Bifunctional protein FolD (315 aa).

Residues 166–168 (GRS), S193, and I234 each bind NADP(+).

It belongs to the tetrahydrofolate dehydrogenase/cyclohydrolase family. As to quaternary structure, homodimer.

It carries out the reaction (6R)-5,10-methylene-5,6,7,8-tetrahydrofolate + NADP(+) = (6R)-5,10-methenyltetrahydrofolate + NADPH. The enzyme catalyses (6R)-5,10-methenyltetrahydrofolate + H2O = (6R)-10-formyltetrahydrofolate + H(+). It participates in one-carbon metabolism; tetrahydrofolate interconversion. Functionally, catalyzes the oxidation of 5,10-methylenetetrahydrofolate to 5,10-methenyltetrahydrofolate and then the hydrolysis of 5,10-methenyltetrahydrofolate to 10-formyltetrahydrofolate. The polypeptide is Bifunctional protein FolD (Treponema pallidum (strain Nichols)).